The following is a 464-amino-acid chain: Glucose-6-phosphate isomerase (464 aa).

Catalysis depends on Glu290, which acts as the Proton donor. Active-site residues include His319 and Lys433.

Belongs to the GPI family.

The protein localises to the cytoplasm. The enzyme catalyses alpha-D-glucose 6-phosphate = beta-D-fructose 6-phosphate. It functions in the pathway carbohydrate biosynthesis; gluconeogenesis. Its pathway is carbohydrate degradation; glycolysis; D-glyceraldehyde 3-phosphate and glycerone phosphate from D-glucose: step 2/4. Catalyzes the reversible isomerization of glucose-6-phosphate to fructose-6-phosphate. This chain is Glucose-6-phosphate isomerase, found in Carboxydothermus hydrogenoformans (strain ATCC BAA-161 / DSM 6008 / Z-2901).